The sequence spans 138 residues: Basic phospholipase A2 PL-X' (138 aa).

The N-terminal stretch at 1–16 (MRTLWIMAVLLVGVEG) is a signal peptide. 7 cysteine pairs are disulfide-bonded: Cys42–Cys131, Cys44–Cys60, Cys59–Cys111, Cys65–Cys138, Cys66–Cys104, Cys73–Cys97, and Cys91–Cys102. 3 residues coordinate Ca(2+): Tyr43, Gly45, and Gly47. The active site involves His63. Residue Asp64 coordinates Ca(2+). Asp105 is an active-site residue.

This sequence belongs to the phospholipase A2 family. Group II subfamily. D49 sub-subfamily. Ca(2+) serves as cofactor. As to expression, expressed by the venom gland.

It localises to the secreted. The catalysed reaction is a 1,2-diacyl-sn-glycero-3-phosphocholine + H2O = a 1-acyl-sn-glycero-3-phosphocholine + a fatty acid + H(+). Its function is as follows. PLA2 catalyzes the calcium-dependent hydrolysis of the 2-acyl groups in 3-sn-phosphoglycerides. The chain is Basic phospholipase A2 PL-X' from Protobothrops flavoviridis (Habu).